Reading from the N-terminus, the 180-residue chain is Progesterone receptor (180 aa).

The NR C4-type zinc-finger motif lies at 1 to 11 (KNCPACRLRKC). Residues 1–16 (KNCPACRLRKCCQAGM) constitute a DNA-binding region (nuclear receptor). Ser-60 is modified (phosphoserine). One can recognise an NR LBD domain in the interval 63–180 (QEIQLFPPLI…QRMKESSFYS (118 aa)). Positions 71–180 (LINLLLSIEP…QRMKESSFYS (110 aa)) are AF2; mediates transcriptional activation. Arg-150 contacts progesterone.

Belongs to the nuclear hormone receptor family. NR3 subfamily. Interacts with SMARD1 and UNC45A. Interacts with CUEDC2; the interaction promotes ubiquitination, decreases sumoylation, and represses transcriptional activity. Interacts with PIAS3; the interaction promotes sumoylation of PR in a hormone-dependent manner, inhibits DNA-binding, and alters nuclear export. Interacts with SP1; the interaction requires ligand-induced phosphorylation by ERK1/2-MAPK. Interacts with PRMT2. Interacts with NCOA2 and NCOA1. Interacts with KLF9. Interacts with GTF2B. Phosphorylated on multiple serine sites. Several of these sites are hormone-dependent. Post-translationally, sumoylation is hormone-dependent and represses transcriptional activity. Sumoylation on all three sites is enhanced by PIAS3. Desumoylated by SENP1. Sumoylation is repressed by ubiquitination and modulated by phosphorylation. In terms of processing, ubiquitination is hormone-dependent and represses sumoylation. Palmitoylated by ZDHHC7 and ZDHHC21. Palmitoylation is required for plasma membrane targeting and for rapid intracellular signaling via ERK and AKT kinases and cAMP generation.

Its subcellular location is the nucleus. It localises to the cytoplasm. The steroid hormones and their receptors are involved in the regulation of eukaryotic gene expression and affect cellular proliferation and differentiation in target tissues. Transcriptional activator of several progesteron-dependent promoters in a variety of cell types. Involved in activation of SRC-dependent MAPK signaling on hormone stimulation. The chain is Progesterone receptor (PGR) from Notamacropus eugenii (Tammar wallaby).